Reading from the N-terminus, the 367-residue chain is Germination protease (367 aa).

The propeptide occupies 1–15 (MKEPLDLSKYSVRTD).

Belongs to the peptidase A25 family. In terms of assembly, homotetramer. In terms of processing, autoproteolytically processed. The inactive tetrameric zymogen termed p46 autoprocesses to a smaller form termed p41, which is active only during spore germination.

It catalyses the reaction Endopeptidase action with P4 Glu or Asp, P1 preferably Glu &gt; Asp, P1' hydrophobic and P2' Ala.. Initiates the rapid degradation of small, acid-soluble proteins during spore germination. This is Germination protease from Bacillus cereus (strain AH187).